A 1462-amino-acid chain; its full sequence is MEKRPLQTSNAANIPSKTIEEMYQKKTQLEHILLRPDTYVGSIEKHTQNLWVYENDEMVHRAVSYVPGLYKIFDEILVNAADNKQRDPSMDSLKVTIDPEANTVSVYNNGDGVPVEIHQEEKVYVPELIFGHLLTSSNYDDNVKKTTGGRNGYGAKLTNIFSTEFIIETADGRRLKKYKQVFSNNMGTKCEPVITKCKASENWTKVTFKPDLEKFKMAYLEEDVVALMKKRVLDMAGCFGKTVKVELNGTLIRFKSFRDYADLFLKCAEKSKPMPLPRIHAKVGDRWEICISLSDGQFQQVSFVNSIATIKGGTHVDYITNQITTYIMNKVNKKKKDANVKAHTVKNHLWVFVNSLIDNPAFDSQTKETLTTRQASFGSKCDVPESMLKDVEKSGIVDTLLSWADFKQSKDLKKTDGTKTQRLRGCKAEDANEAGGRNSEKCTLILTEGDSAKALAMAGLSVVGRDHYGVFPLRGKLLNVREASSKQIMDNEEIQNIKKILGLQQNKEYTNVKSLRYGHLMIMADQDHDGSHIKGLLINFIHSFWPSLLKVPSFLVEFTTPVIRASHPNKTITSFYSMPEYEAWKERLGNSATSWKIKYYKGLGTSTPQEGREYFSDLGRHRKDFIWDDELDGNAIELAFSKKKAEGRKIWMRNFEPGTCRDHEAKLINYKDFVNKELILFSRADLFGSFKKKLYKEIKVAQFIGYVSEHSAYHHGEQSLASTIIGMAQDFVGSNNINLLKPNGQFGTCNLGGKDHASARYIYTELSPVTRCLFHEHDDKLLEYLNEDGKSIEPNWYMPIIPLVLVNGSEGIGTGWSSYIPNYNPREIIANVRRLLNGEELVPMDPWYKGFRGTIEKSAKEGGYIVNGTVTEIDEQTFRITELPIRKWTQDYKQFLESITDGAPNVKDPLIEDFRQNGDDAIVDIEIKMKPEKIATILQEGLFKKFKLTSTISTSNMHLFDAEGNKKFDTPEQILEEFFPLRLDYYEKSKEYILGNLNRLLLILDNKVRFILGVVNGEIIVSNRKKAELLIELKEKGFTPMPRKGKSTKPQVAGANDDDSEEQEDAEPETASQSVSVEGATWGDYDDLLSLPIGTLTLESVQKLLDEKTEKEKEYEILSGTPTTSLWLKDLDEFEKKLDELDLKYAEDDRKRASQGSKKANGFASKPAKKPPQPRKNTKKAKSVEPENDNSSMEIENAVEAAKPAEVAKPKGRAAPKKNIQKEPEDDIQSLQERLAAYNIESSGEKSQAMESEEVQQKAAGKKQNNKRGGAKKKSSTIVLESDSDNEVNDVDDDDDDFEEVQQKAAPVKKGGRKPAAQNAKKAPAKAPAKAPAAPKKRSVGTKQSAGQKLLTDMLQPAEGTGTSPEKKVRKMRESPFNKKSGSILGRAAAAKDISPIADCSAGSASNTPLSEDEVVEIAPQPARARPQRANRTQMKYALSESESEEDSDEDAELSDFEEDDD.

Residues Asn79, Asn108, 136-138 (SSN), and 149-156 (GRNGYGAK) contribute to the ATP site. The segment at 332–334 (NKK) is interaction with DNA. 365 to 367 (QTK) is an ATP binding site. A Toprim domain is found at 442–556 (CTLILTEGDS…SLLKVPSFLV (115 aa)). Positions 448, 525, and 527 each coordinate Mg(2+). Positions 671–1131 (KDFVNKELIL…PTTSLWLKDL (461 aa)) constitute a Topo IIA-type catalytic domain. The active-site O-(5'-phospho-DNA)-tyrosine intermediate is Tyr761. The interaction with DNA stretch occupies residues 947 to 956 (KLTSTISTSN). 2 disordered regions span residues 1040–1077 (PMPRKGKSTKPQVAGANDDDSEEQEDAEPETASQSVSV) and 1147–1462 (EDDR…EDDD). A compositionally biased stretch (acidic residues) spans 1056 to 1068 (NDDDSEEQEDAEP). A compositionally biased stretch (basic residues) spans 1167 to 1181 (PAKKPPQPRKNTKKA). Residues 1198-1207 (AVEAAKPAEV) show a composition bias toward low complexity. Polar residues predominate over residues 1240 to 1250 (IESSGEKSQAM). Residues 1260–1275 (AGKKQNNKRGGAKKKS) are compositionally biased toward basic residues. Positions 1282-1300 (SDSDNEVNDVDDDDDDFEE) are enriched in acidic residues. 2 stretches are compositionally biased toward low complexity: residues 1314 to 1334 (KPAAQNAKKAPAKAPAKAPAA) and 1419 to 1430 (APQPARARPQRA). Residues 1442 to 1462 (SESEEDSDEDAELSDFEEDDD) show a composition bias toward acidic residues.

This sequence belongs to the type II topoisomerase family. Homodimer. Mg(2+) is required as a cofactor. Mn(2+) serves as cofactor. It depends on Ca(2+) as a cofactor. Abundant in proliferative tissues.

The enzyme catalyses ATP-dependent breakage, passage and rejoining of double-stranded DNA.. Functionally, control of topological states of DNA by transient breakage and subsequent rejoining of DNA strands. Topoisomerase II makes double-strand breaks. In Pisum sativum (Garden pea), this protein is DNA topoisomerase 2 (TOP2).